A 426-amino-acid chain; its full sequence is Serine--tRNA ligase (426 aa).

231-233 (TAE) contributes to the L-serine binding site. 262-264 (RSE) lines the ATP pocket. Glutamate 285 lines the L-serine pocket. 349–352 (EISS) contributes to the ATP binding site. Serine 385 is an L-serine binding site.

Belongs to the class-II aminoacyl-tRNA synthetase family. Type-1 seryl-tRNA synthetase subfamily. As to quaternary structure, homodimer. The tRNA molecule binds across the dimer.

The protein resides in the cytoplasm. It carries out the reaction tRNA(Ser) + L-serine + ATP = L-seryl-tRNA(Ser) + AMP + diphosphate + H(+). The catalysed reaction is tRNA(Sec) + L-serine + ATP = L-seryl-tRNA(Sec) + AMP + diphosphate + H(+). Its pathway is aminoacyl-tRNA biosynthesis; selenocysteinyl-tRNA(Sec) biosynthesis; L-seryl-tRNA(Sec) from L-serine and tRNA(Sec): step 1/1. In terms of biological role, catalyzes the attachment of serine to tRNA(Ser). Is also able to aminoacylate tRNA(Sec) with serine, to form the misacylated tRNA L-seryl-tRNA(Sec), which will be further converted into selenocysteinyl-tRNA(Sec). This Teredinibacter turnerae (strain ATCC 39867 / T7901) protein is Serine--tRNA ligase.